Here is a 217-residue protein sequence, read N- to C-terminus: 2-phospho-L-lactate guanylyltransferase (217 aa).

The protein belongs to the CofC family. Homodimer.

The catalysed reaction is (2S)-2-phospholactate + GTP + H(+) = (2S)-lactyl-2-diphospho-5'-guanosine + diphosphate. It functions in the pathway cofactor biosynthesis; coenzyme F420 biosynthesis. Its function is as follows. Guanylyltransferase that catalyzes the activation of (2S)-2-phospholactate (2-PL) as (2S)-lactyl-2-diphospho-5'-guanosine, via the condensation of 2-PL with GTP. It is involved in the biosynthesis of coenzyme F420, a hydride carrier cofactor. This chain is 2-phospho-L-lactate guanylyltransferase, found in Halorubrum lacusprofundi (strain ATCC 49239 / DSM 5036 / JCM 8891 / ACAM 34).